The chain runs to 117 residues: Large ribosomal subunit protein uL18 (117 aa).

Belongs to the universal ribosomal protein uL18 family. Part of the 50S ribosomal subunit; part of the 5S rRNA/L5/L18/L25 subcomplex. Contacts the 5S and 23S rRNAs.

In terms of biological role, this is one of the proteins that bind and probably mediate the attachment of the 5S RNA into the large ribosomal subunit, where it forms part of the central protuberance. This Tolumonas auensis (strain DSM 9187 / NBRC 110442 / TA 4) protein is Large ribosomal subunit protein uL18.